The primary structure comprises 195 residues: dITP/XTP pyrophosphatase (195 aa).

9–14 is a substrate binding site; it reads TGNKGK. Mg(2+) contacts are provided by E41 and D70. The active-site Proton acceptor is D70. Residues S71, 155–158, K178, and 183–184 each bind substrate; these read FGYD and HR.

Belongs to the HAM1 NTPase family. Homodimer. Mg(2+) serves as cofactor.

It carries out the reaction XTP + H2O = XMP + diphosphate + H(+). It catalyses the reaction dITP + H2O = dIMP + diphosphate + H(+). The enzyme catalyses ITP + H2O = IMP + diphosphate + H(+). In terms of biological role, pyrophosphatase that catalyzes the hydrolysis of nucleoside triphosphates to their monophosphate derivatives, with a high preference for the non-canonical purine nucleotides XTP (xanthosine triphosphate), dITP (deoxyinosine triphosphate) and ITP. Seems to function as a house-cleaning enzyme that removes non-canonical purine nucleotides from the nucleotide pool, thus preventing their incorporation into DNA/RNA and avoiding chromosomal lesions. This Haemophilus influenzae (strain ATCC 51907 / DSM 11121 / KW20 / Rd) protein is dITP/XTP pyrophosphatase.